The chain runs to 474 residues: Probable cytosol aminopeptidase (474 aa).

K237 and D242 together coordinate Mn(2+). K249 is a catalytic residue. Mn(2+) is bound by residues D260, D319, and E321. Residue R323 is part of the active site.

This sequence belongs to the peptidase M17 family. It depends on Mn(2+) as a cofactor.

It is found in the cytoplasm. It carries out the reaction Release of an N-terminal amino acid, Xaa-|-Yaa-, in which Xaa is preferably Leu, but may be other amino acids including Pro although not Arg or Lys, and Yaa may be Pro. Amino acid amides and methyl esters are also readily hydrolyzed, but rates on arylamides are exceedingly low.. It catalyses the reaction Release of an N-terminal amino acid, preferentially leucine, but not glutamic or aspartic acids.. Presumably involved in the processing and regular turnover of intracellular proteins. Catalyzes the removal of unsubstituted N-terminal amino acids from various peptides. This Helicobacter hepaticus (strain ATCC 51449 / 3B1) protein is Probable cytosol aminopeptidase.